The chain runs to 191 residues: UPF0669 protein C6orf120 (191 aa).

An N-terminal signal peptide occupies residues 1–30; it reads MAAPRGRAAPWTTALLLLLASQVLSPGSCA. Asn53 is a glycosylation site (N-linked (GlcNAc...) asparagine).

Belongs to the UPF0669 family. Mainly expressed in hepatocytes and some weak expression in germinal center cells of lymph nodes.

Its subcellular location is the secreted. In terms of biological role, may be involved in induction of apoptosis in CD4(+) T-cells, but not CD8(+) T-cells or hepatocytes. In Homo sapiens (Human), this protein is UPF0669 protein C6orf120 (C6orf120).